The primary structure comprises 738 residues: Coiled-coil domain-containing protein 142 (738 aa).

The interval 1-34 (MARASSSSGPLPPLANVPSSWAQPVGAGEERDEG) is disordered. The stretch at 69–92 (ALQRLRATLLRLHREREQLLRARD) forms a coiled coil. The interval 682-704 (LSTLGGGGRGGGGGGGPGPSPEA) is disordered. The span at 685 to 698 (LGGGGRGGGGGGGP) shows a compositional bias: gly residues.

The polypeptide is Coiled-coil domain-containing protein 142 (Ccdc142) (Mus musculus (Mouse)).